The following is a 267-amino-acid chain: Undecaprenyl-diphosphatase (267 aa).

Helical transmembrane passes span 1-21 (MTLF…FLPV), 40-60 (GLAI…LYFW), 83-103 (AFLA…GLII), 111-131 (MMRS…VLYW), 144-164 (GWTL…LIPG), 189-209 (AMLM…ADVI), 219-239 (DGAL…ALMM), and 245-265 (VSFT…LVYA).

The protein belongs to the UppP family.

It is found in the cell inner membrane. It carries out the reaction di-trans,octa-cis-undecaprenyl diphosphate + H2O = di-trans,octa-cis-undecaprenyl phosphate + phosphate + H(+). In terms of biological role, catalyzes the dephosphorylation of undecaprenyl diphosphate (UPP). Confers resistance to bacitracin. This chain is Undecaprenyl-diphosphatase, found in Roseobacter denitrificans (strain ATCC 33942 / OCh 114) (Erythrobacter sp. (strain OCh 114)).